We begin with the raw amino-acid sequence, 170 residues long: MQVDEQRLRFRDAMASLAAAVNIVTTAGHAGRCGITATAVCSVTDTPPSVMVCINANSAMNPVFQGNGRLCINVLNHEQELMARHFAGMTGMAMEERFHQPCWQNGPLGQPVLNGALAGLEGEISEVQTIGTHLVYLVAIKNIILSQDGHGLIYFKRRFHPVRLEMEAPV.

It belongs to the non-flavoprotein flavin reductase family. HpaC subfamily. In terms of assembly, homodimer. 4-HPA 3-monooxygenase consists of a reductase component HpaC and an oxygenase component HpaB.

It catalyses the reaction a reduced flavin + NAD(+) = an oxidized flavin + NADH + 2 H(+). It functions in the pathway aromatic compound metabolism; 4-hydroxyphenylacetate degradation; pyruvate and succinate semialdehyde from 4-hydroxyphenylacetate: step 1/7. Its function is as follows. Catalyzes the reduction of free flavins (FMN, FAD and riboflavin) by NADH. Subsequently, the reduced flavins diffuse to the large HpaB component or to other electron acceptors such as cytochrome c and Fe(3+) ion. This Salmonella typhimurium (strain LT2 / SGSC1412 / ATCC 700720) protein is 4-hydroxyphenylacetate 3-monooxygenase reductase component (hpaC).